Reading from the N-terminus, the 101-residue chain is Non-structural 7a protein (101 aa).

Residues 1 to 23 (MLVFLHAVLVTALILLLIGRIQL) form the signal peptide. A helical transmembrane segment spans residues 76-96 (LLVVVLRVIFLVLLGFSCYTL).

The protein belongs to the coronaviruses ns7/ns7a protein family.

The protein resides in the host membrane. Its function is as follows. May function in the formation of membrane-bound replication complexes or in the assembly of the virus. This chain is Non-structural 7a protein, found in Feline enteric coronavirus (strain 79-1683) (FeCoV).